Consider the following 341-residue polypeptide: Keratin-associated protein 29-1 (341 aa).

7 repeat units span residues 5-9 (CCPGN), 115-119 (CCQEK), 120-124 (CCDAS), 150-154 (CCDAG), 240-244 (CCVPS), 276-280 (CCKPA), and 307-311 (CCVTG). A 7 X 5 AA repeats of C-C-X(3) region spans residues 5 to 311 (CCPGNTTAIP…GCKSACCVTG (307 aa)).

Belongs to the KRTAP type 10 family.

The polypeptide is Keratin-associated protein 29-1 (KRTAP29-1) (Homo sapiens (Human)).